A 405-amino-acid polypeptide reads, in one-letter code: Imidazolonepropionase (405 aa).

Fe(3+)-binding residues include H73 and H75. Zn(2+)-binding residues include H73 and H75. The 4-imidazolone-5-propanoate site is built by R82, Y145, and H178. Residue Y145 participates in N-formimidoyl-L-glutamate binding. Position 243 (H243) interacts with Fe(3+). A Zn(2+)-binding site is contributed by H243. Q246 is a binding site for 4-imidazolone-5-propanoate. D318 contacts Fe(3+). A Zn(2+)-binding site is contributed by D318. N320 and G322 together coordinate N-formimidoyl-L-glutamate. Residue T323 coordinates 4-imidazolone-5-propanoate.

Belongs to the metallo-dependent hydrolases superfamily. HutI family. The cofactor is Zn(2+). It depends on Fe(3+) as a cofactor.

It is found in the cytoplasm. It carries out the reaction 4-imidazolone-5-propanoate + H2O = N-formimidoyl-L-glutamate. It participates in amino-acid degradation; L-histidine degradation into L-glutamate; N-formimidoyl-L-glutamate from L-histidine: step 3/3. Its function is as follows. Catalyzes the hydrolytic cleavage of the carbon-nitrogen bond in imidazolone-5-propanoate to yield N-formimidoyl-L-glutamate. It is the third step in the universal histidine degradation pathway. This Brucella suis (strain ATCC 23445 / NCTC 10510) protein is Imidazolonepropionase.